We begin with the raw amino-acid sequence, 143 residues long: Transcriptional regulator MraZ (143 aa).

SpoVT-AbrB domains are found at residues 5 to 47 and 76 to 119; these read QYEH…SLEE and AVEC…SKEV.

It belongs to the MraZ family. Forms oligomers.

The protein localises to the cytoplasm. It localises to the nucleoid. The polypeptide is Transcriptional regulator MraZ (Thermoanaerobacter pseudethanolicus (strain ATCC 33223 / 39E) (Clostridium thermohydrosulfuricum)).